Consider the following 276-residue polypeptide: MHPAAEHSPLGKSSEYVSTYTPSLLFPIPRAAKWAELGLSADTLPYKGVDYWNCFELSWLLPSGKPVVAIGEFSIPADSPNIIESKSFKLYLNSLNQTPFDDRATLEATLRTDLSAAAGKPVGVRIRSLQEVEAEGVVALPGVCIDDLDISVDSYEHPRPELLRCDASRVVEESVHSHLLKSNCPVTSQPDWGSVVVQYRGAALDHASLLAYLVSFRQHSDFHEQCVERIFLDLQRLLKPERLTVYARYVRRGGLDINPYRSTETADFANHRLVRQ.

83 to 85 serves as a coordination point for substrate; that stretch reads IES. 85–86 is a binding site for NADPH; the sequence is SK. Cysteine 184 acts as the Thioimide intermediate in catalysis. The active-site Proton donor is the aspartate 191. 223–224 provides a ligand contact to substrate; it reads HE. NADPH is bound at residue 252 to 253; the sequence is RG.

It belongs to the GTP cyclohydrolase I family. QueF type 2 subfamily. In terms of assembly, homodimer.

It localises to the cytoplasm. It catalyses the reaction 7-aminomethyl-7-carbaguanine + 2 NADP(+) = 7-cyano-7-deazaguanine + 2 NADPH + 3 H(+). It participates in tRNA modification; tRNA-queuosine biosynthesis. Its function is as follows. Catalyzes the NADPH-dependent reduction of 7-cyano-7-deazaguanine (preQ0) to 7-aminomethyl-7-deazaguanine (preQ1). This chain is NADPH-dependent 7-cyano-7-deazaguanine reductase, found in Pseudomonas fluorescens (strain ATCC BAA-477 / NRRL B-23932 / Pf-5).